Here is a 190-residue protein sequence, read N- to C-terminus: Movement protein (190 aa).

The protein belongs to the tombusvirus/aureusvirus movement protein p22 family.

Its subcellular location is the host membrane. Its function is as follows. Transports viral genome to neighboring plant cells directly through plasmosdesmata, without any budding. The movement protein allows efficient cell to cell propagation, by bypassing the host cell wall barrier. The chain is Movement protein from Cucumber necrosis virus (CNV).